The sequence spans 237 residues: MKHSYFISDLHLSETQPELTALFVDFMQNLAPQAERLYILGDLFDFWIGDDEQSALIQQVKDLIKFVSDQGVQCYFQHGNRDFLIGERFSKETGAQLLPDYQLITLYDKKILLCHGDTLCIDDEAYQQFRRRVHQKWLQRLFLCLPLKVRVIIAEKIRAKSNQDKQAKSQEIMDVNQAFTAEKVQEFGVNLLIHGHTHREAIHQQEEFTRIVLGDWRKNYASILKMDESGEFGFIKD.

Mn(2+)-binding residues include D9, H11, D42, N80, and H115. 80-81 is a binding site for substrate; that stretch reads NR. The substrate site is built by D123, S161, K165, K168, and H196. Mn(2+)-binding residues include H196 and H198.

It belongs to the LpxH family. Requires Mn(2+) as cofactor.

It is found in the cell inner membrane. The protein localises to the cytoplasm. It carries out the reaction UDP-2-N,3-O-bis[(3R)-3-hydroxytetradecanoyl]-alpha-D-glucosamine + H2O = 2-N,3-O-bis[(3R)-3-hydroxytetradecanoyl]-alpha-D-glucosaminyl 1-phosphate + UMP + 2 H(+). The protein operates within glycolipid biosynthesis; lipid IV(A) biosynthesis; lipid IV(A) from (3R)-3-hydroxytetradecanoyl-[acyl-carrier-protein] and UDP-N-acetyl-alpha-D-glucosamine: step 4/6. Functionally, hydrolyzes the pyrophosphate bond of UDP-2,3-diacylglucosamine to yield 2,3-diacylglucosamine 1-phosphate (lipid X) and UMP by catalyzing the attack of water at the alpha-P atom. Involved in the biosynthesis of lipid A, a phosphorylated glycolipid that anchors the lipopolysaccharide to the outer membrane of the cell. The sequence is that of UDP-2,3-diacylglucosamine hydrolase from Haemophilus influenzae (strain ATCC 51907 / DSM 11121 / KW20 / Rd).